A 252-amino-acid chain; its full sequence is Probable transcriptional regulatory protein Cagg_2594 (252 aa).

Basic residues predominate over residues 1-14 (MSGHSKWHTIRRAK). Residues 1-22 (MSGHSKWHTIRRAKSANDQRRG) are disordered.

The protein belongs to the TACO1 family.

The protein localises to the cytoplasm. The sequence is that of Probable transcriptional regulatory protein Cagg_2594 from Chloroflexus aggregans (strain MD-66 / DSM 9485).